A 441-amino-acid polypeptide reads, in one-letter code: Queuine tRNA-ribosyltransferase accessory subunit 2 (441 aa).

Positions 307, 309, 312, and 338 each coordinate Zn(2+).

This sequence belongs to the queuine tRNA-ribosyltransferase family. QTRT2 subfamily. In terms of assembly, heterodimer of a catalytic subunit and an accessory subunit. It depends on Zn(2+) as a cofactor.

The protein localises to the cytoplasm. Non-catalytic subunit of the queuine tRNA-ribosyltransferase (TGT) that catalyzes the base-exchange of a guanine (G) residue with queuine (Q) at position 34 (anticodon wobble position) in tRNAs with GU(N) anticodons (tRNA-Asp, -Asn, -His and -Tyr), resulting in the hypermodified nucleoside queuosine (7-(((4,5-cis-dihydroxy-2-cyclopenten-1-yl)amino)methyl)-7-deazaguanosine). This Schizosaccharomyces pombe (strain 972 / ATCC 24843) (Fission yeast) protein is Queuine tRNA-ribosyltransferase accessory subunit 2 (qtr2).